The sequence spans 82 residues: Putative membrane protein insertion efficiency factor (82 aa).

Belongs to the UPF0161 family.

The protein localises to the cell inner membrane. In terms of biological role, could be involved in insertion of integral membrane proteins into the membrane. This is Putative membrane protein insertion efficiency factor from Thermus thermophilus (strain ATCC BAA-163 / DSM 7039 / HB27).